The chain runs to 265 residues: Mlc titration factor A (265 aa).

4 residues coordinate Zn(2+): H111, H148, H152, and E211.

Belongs to the MtfA family. Interacts with Mlc. The cofactor is Zn(2+).

It is found in the cytoplasm. In terms of biological role, involved in the modulation of the activity of the glucose-phosphotransferase system (glucose-PTS). Interacts with the transcriptional repressor Mlc, preventing its interaction with DNA and leading to the modulation of expression of genes regulated by Mlc, including ptsG, which encodes the PTS system glucose-specific EIICB component. Functionally, shows zinc-dependent metallopeptidase activity. This is Mlc titration factor A from Escherichia coli O7:K1 (strain IAI39 / ExPEC).